We begin with the raw amino-acid sequence, 473 residues long: Fumarate hydratase class II 2 (473 aa).

A disordered region spans residues 1 to 28 (MAKSARTKTARPATRTETDSFGPIEVPS). Substrate contacts are provided by residues 108-110 (SGT), 139-142 (HPND), 149-151 (SSN), and Thr197. His198 functions as the Proton donor/acceptor in the catalytic mechanism. The active site involves Ser328. Substrate contacts are provided by residues Ser329 and 334–336 (KVN).

It belongs to the class-II fumarase/aspartase family. Fumarase subfamily. As to quaternary structure, homotetramer.

The protein localises to the cytoplasm. It catalyses the reaction (S)-malate = fumarate + H2O. Its pathway is carbohydrate metabolism; tricarboxylic acid cycle; (S)-malate from fumarate: step 1/1. In terms of biological role, involved in the TCA cycle. Catalyzes the stereospecific interconversion of fumarate to L-malate. The chain is Fumarate hydratase class II 2 from Bradyrhizobium diazoefficiens (strain JCM 10833 / BCRC 13528 / IAM 13628 / NBRC 14792 / USDA 110).